The chain runs to 346 residues: S-adenosylmethionine:tRNA ribosyltransferase-isomerase (346 aa).

This sequence belongs to the QueA family. In terms of assembly, monomer.

The protein resides in the cytoplasm. It carries out the reaction 7-aminomethyl-7-carbaguanosine(34) in tRNA + S-adenosyl-L-methionine = epoxyqueuosine(34) in tRNA + adenine + L-methionine + 2 H(+). Its pathway is tRNA modification; tRNA-queuosine biosynthesis. Transfers and isomerizes the ribose moiety from AdoMet to the 7-aminomethyl group of 7-deazaguanine (preQ1-tRNA) to give epoxyqueuosine (oQ-tRNA). In Lysinibacillus sphaericus (strain C3-41), this protein is S-adenosylmethionine:tRNA ribosyltransferase-isomerase.